A 196-amino-acid polypeptide reads, in one-letter code: Probable molybdenum cofactor guanylyltransferase (196 aa).

GTP contacts are provided by residues 7 to 9 (LAG), lysine 19, aspartate 68, and aspartate 93. Residue aspartate 93 coordinates Mg(2+).

The protein belongs to the MobA family. Requires Mg(2+) as cofactor.

The protein resides in the cytoplasm. The enzyme catalyses Mo-molybdopterin + GTP + H(+) = Mo-molybdopterin guanine dinucleotide + diphosphate. In terms of biological role, transfers a GMP moiety from GTP to Mo-molybdopterin (Mo-MPT) cofactor (Moco or molybdenum cofactor) to form Mo-molybdopterin guanine dinucleotide (Mo-MGD) cofactor. This chain is Probable molybdenum cofactor guanylyltransferase, found in Pyrococcus furiosus (strain ATCC 43587 / DSM 3638 / JCM 8422 / Vc1).